The chain runs to 205 residues: Proteasome subunit beta type-3 (205 aa).

The protein belongs to the peptidase T1B family. As to quaternary structure, the 26S proteasome consists of a 20S proteasome core and two 19S regulatory subunits. The 20S proteasome core is composed of 28 subunits that are arranged in four stacked rings, resulting in a barrel-shaped structure. The two end rings are each formed by seven alpha subunits, and the two central rings are each formed by seven beta subunits. The catalytic chamber with the active sites is on the inside of the barrel.

The protein localises to the cytoplasm. Its subcellular location is the nucleus. Functionally, non-catalytic component of the proteasome, a multicatalytic proteinase complex which is characterized by its ability to cleave peptides with Arg, Phe, Tyr, Leu, and Glu adjacent to the leaving group at neutral or slightly basic pH. The proteasome has an ATP-dependent proteolytic activity. This chain is Proteasome subunit beta type-3 (PSB3), found in Trypanosoma brucei brucei.